Reading from the N-terminus, the 119-residue chain is MPRVKRGVTARARHKKVLKLAKGYYGARSRTYRVAVQAVTKAGQYAYRDRRQKKRQFRQLWIARINAASRQNGLSYSRFINGLKKASIEIDRKILADIAVFDKVVFATLVEKAKEALTK.

It belongs to the bacterial ribosomal protein bL20 family.

Functionally, binds directly to 23S ribosomal RNA and is necessary for the in vitro assembly process of the 50S ribosomal subunit. It is not involved in the protein synthesizing functions of that subunit. This is Large ribosomal subunit protein bL20 from Shewanella frigidimarina (strain NCIMB 400).